Here is a 283-residue protein sequence, read N- to C-terminus: MTAQKLDGTATAAAIKGELTTRVAALHERGIRPGLGTILVGDDPGSRWYVNGKHKDCAEVGIESIRIDLPATATQDEIEDAVRVLNDDPACTGYIVQLPLPKGRDENRVLGLIDPAKDADGLHPTNLGWLVLGKAAPLPCTPNGIVELLRRHGVEIAGAEVTVVGRGVTVGRPLGLLLTRRSENATVTLCHTGTRDLAAHVRGADIVVAAAGVPGIVTGAMVKPGAAVLDVGVSRVDGKLAGDVAPEVWDVARWVSPNPGGVGPMTRAMLLSNIVAMAEQTDS.

Residues 165–167 (GRG), T192, and V233 contribute to the NADP(+) site.

It belongs to the tetrahydrofolate dehydrogenase/cyclohydrolase family. In terms of assembly, homodimer.

The catalysed reaction is (6R)-5,10-methylene-5,6,7,8-tetrahydrofolate + NADP(+) = (6R)-5,10-methenyltetrahydrofolate + NADPH. The enzyme catalyses (6R)-5,10-methenyltetrahydrofolate + H2O = (6R)-10-formyltetrahydrofolate + H(+). It participates in one-carbon metabolism; tetrahydrofolate interconversion. Functionally, catalyzes the oxidation of 5,10-methylenetetrahydrofolate to 5,10-methenyltetrahydrofolate and then the hydrolysis of 5,10-methenyltetrahydrofolate to 10-formyltetrahydrofolate. This chain is Bifunctional protein FolD 2, found in Nocardioides sp. (strain ATCC BAA-499 / JS614).